We begin with the raw amino-acid sequence, 1679 residues long: Probable myosin heavy chain ECU04_1000 (1679 aa).

Polar residues predominate over residues 1–14 (MEGTTNKDIGSGSS). The interval 1-22 (MEGTTNKDIGSGSSRPGGEVSV) is disordered. Residues 31–79 (MEKKWVWAPSSKEAYVCGFVVKEEGDVLEIDCRGVIVRHKSCEVFRMNP) form the Myosin N-terminal SH3-like domain. Residues 83–754 (DMVDDLAELS…VLADIEDMRD (672 aa)) enclose the Myosin motor domain. Position 176–183 (176–183 (GESGAGKT)) interacts with ATP. Residues 624-646 (LASLMSELRRTNPHFVRCIIPNL) are actin-binding. Residues 823-1644 (GEMKEKEAMI…SKMLEMKKKL (822 aa)) are a coiled coil.

It belongs to the TRAFAC class myosin-kinesin ATPase superfamily. Myosin family.

Cellular myosin that appears to play a role in cytokinesis, cell shape, and specialized functions such as secretion and capping. This is Probable myosin heavy chain ECU04_1000 from Encephalitozoon cuniculi (strain GB-M1) (Microsporidian parasite).